The chain runs to 113 residues: Large ribosomal subunit protein uL22 (113 aa).

The protein belongs to the universal ribosomal protein uL22 family. Part of the 50S ribosomal subunit.

Its function is as follows. This protein binds specifically to 23S rRNA; its binding is stimulated by other ribosomal proteins, e.g. L4, L17, and L20. It is important during the early stages of 50S assembly. It makes multiple contacts with different domains of the 23S rRNA in the assembled 50S subunit and ribosome. The globular domain of the protein is located near the polypeptide exit tunnel on the outside of the subunit, while an extended beta-hairpin is found that lines the wall of the exit tunnel in the center of the 70S ribosome. This Bacillus mycoides (strain KBAB4) (Bacillus weihenstephanensis) protein is Large ribosomal subunit protein uL22.